A 914-amino-acid chain; its full sequence is Effector protein hopAE1 (914 aa).

The span at 1–13 shows a compositional bias: polar residues; the sequence is MMPSQITRSSHSS. Positions 1–31 are disordered; the sequence is MMPSQITRSSHSSLPEVAPASGDAAGVSEQT.

The protein belongs to the HopW family.

The protein localises to the secreted. This Pseudomonas syringae pv. syringae (strain B728a) protein is Effector protein hopAE1 (hopAE1).